Consider the following 238-residue polypeptide: Fish-egg lectin (238 aa).

5 repeat units span residues 1–34 (LDCT…VLID), 35–68 (NVFT…KYQS), 69–106 (GGFV…MDAN), 107–156 (NKWP…CSGS), and 157–199 (GSFI…KPDG). Residues 1–199 (LDCTVIDGNL…TGVTRSKPDG (199 aa)) are 5 X approximate tandem repeats. 4 cysteine pairs are disulfide-bonded: cysteine 3–cysteine 234, cysteine 100–cysteine 153, cysteine 128–cysteine 133, and cysteine 208–cysteine 226. Asparagine 27 carries N-linked (GlcNAc...) asparagine glycosylation.

Belongs to the tectonin family. As to expression, expressed in the eggs.

It is found in the secreted. In terms of biological role, lipopolysaccharide-binding protein with a very low agglutinating activity for human A-type erythrocytes and interacts with both Gram-positive and Gram-negative bacteria. The protein is Fish-egg lectin of Cyprinus carpio (Common carp).